The primary structure comprises 323 residues: Melanocortin receptor 3 (323 aa).

Over 1 to 37 the chain is Extracellular; that stretch reads MNSSCCPSSSYPTLPNLSQHPAAPSASNRSGSGFCEQ. 3 N-linked (GlcNAc...) asparagine glycosylation sites follow: N2, N16, and N28. Residues 38–63 traverse the membrane as a helical segment; the sequence is VFIKPEVFLALGIVSLMENILVILAV. Over 64–75 the chain is Cytoplasmic; the sequence is VRNGNLHSPMYF. Residues 76–100 traverse the membrane as a helical segment; that stretch reads FLCSLAAADMLVSLSNSLETIMIVV. Over 101 to 118 the chain is Extracellular; the sequence is INSDSLTLEDQFIQHMDN. A helical membrane pass occupies residues 119-140; the sequence is IFDSMICISLVASICNLLAIAV. Residues 141–160 are Cytoplasmic-facing; it reads DRYVTIFYALRYHSIMTVRK. A helical transmembrane segment spans residues 161–181; it reads ALSLIVAIWVCCGICGVMFIV. Topologically, residues 182 to 186 are extracellular; that stretch reads YSESK. A helical transmembrane segment spans residues 187–210; that stretch reads MVIVCLITMFFAMVLLMGTLYIHM. Topologically, residues 211–245 are cytoplasmic; sequence FLFARLHVQRIAALPPADGVAPQQHSCMKGAVTIT. A helical membrane pass occupies residues 246-268; it reads ILLGVFIFCWAPFFLHLVLIITC. Over 269–277 the chain is Extracellular; it reads PTNPYCICY. The helical transmembrane segment at 278-301 threads the bilayer; the sequence is TAHFNTYLVLIMCNSVIDPLIYAF. Over 302 to 323 the chain is Cytoplasmic; the sequence is RSLELRNTFKEILCGCNGMNVG. Residue C315 is the site of S-palmitoyl cysteine attachment.

This sequence belongs to the G-protein coupled receptor 1 family. As to expression, brain.

Its subcellular location is the cell membrane. Functionally, receptor for MSH (alpha, beta and gamma) and ACTH. This receptor is mediated by G proteins which activate adenylate cyclase. Required for expression of anticipatory patterns of activity and wakefulness during periods of limited nutrient availability and for the normal regulation of circadian clock activity in the brain. The chain is Melanocortin receptor 3 (Mc3r) from Rattus norvegicus (Rat).